The following is a 444-amino-acid chain: Tubulin beta chain (444 aa).

GTP is bound by residues Q11, E69, S138, G142, T143, G144, N204, and N226. E69 contacts Mg(2+).

The protein belongs to the tubulin family. As to quaternary structure, dimer of alpha and beta chains. A typical microtubule is a hollow water-filled tube with an outer diameter of 25 nm and an inner diameter of 15 nM. Alpha-beta heterodimers associate head-to-tail to form protofilaments running lengthwise along the microtubule wall with the beta-tubulin subunit facing the microtubule plus end conferring a structural polarity. Microtubules usually have 13 protofilaments but different protofilament numbers can be found in some organisms and specialized cells. The cofactor is Mg(2+).

It localises to the cytoplasm. Its subcellular location is the cytoskeleton. Its function is as follows. Tubulin is the major constituent of microtubules, a cylinder consisting of laterally associated linear protofilaments composed of alpha- and beta-tubulin heterodimers. Microtubules grow by the addition of GTP-tubulin dimers to the microtubule end, where a stabilizing cap forms. Below the cap, tubulin dimers are in GDP-bound state, owing to GTPase activity of alpha-tubulin. The polypeptide is Tubulin beta chain (Trichuris trichiura (Whipworm)).